Consider the following 287-residue polypeptide: Ribonuclease Z (287 aa).

Histidine 64, histidine 66, aspartate 68, histidine 69, histidine 124, aspartate 191, and histidine 250 together coordinate Zn(2+). Residue aspartate 68 is the Proton acceptor of the active site.

The protein belongs to the RNase Z family. In terms of assembly, homodimer. Requires Zn(2+) as cofactor.

The catalysed reaction is Endonucleolytic cleavage of RNA, removing extra 3' nucleotides from tRNA precursor, generating 3' termini of tRNAs. A 3'-hydroxy group is left at the tRNA terminus and a 5'-phosphoryl group is left at the trailer molecule.. In terms of biological role, zinc phosphodiesterase, which displays some tRNA 3'-processing endonuclease activity. Probably involved in tRNA maturation, by removing a 3'-trailer from precursor tRNA. The polypeptide is Ribonuclease Z (Pyrobaculum islandicum (strain DSM 4184 / JCM 9189 / GEO3)).